Reading from the N-terminus, the 410-residue chain is Peptidase T (410 aa).

Zn(2+) is bound at residue histidine 79. Residue aspartate 81 is part of the active site. Aspartate 142 provides a ligand contact to Zn(2+). Glutamate 176 (proton acceptor) is an active-site residue. The Zn(2+) site is built by glutamate 177, aspartate 199, and histidine 381.

Belongs to the peptidase M20B family. Requires Zn(2+) as cofactor.

It is found in the cytoplasm. The enzyme catalyses Release of the N-terminal residue from a tripeptide.. Cleaves the N-terminal amino acid of tripeptides. The polypeptide is Peptidase T (Bacillus licheniformis (strain ATCC 14580 / DSM 13 / JCM 2505 / CCUG 7422 / NBRC 12200 / NCIMB 9375 / NCTC 10341 / NRRL NRS-1264 / Gibson 46)).